We begin with the raw amino-acid sequence, 72 residues long: Translation initiation factor IF-1 (72 aa).

The region spanning 1-72 (MSKDDVIEMQ…TRGRITWRAK (72 aa)) is the S1-like domain.

This sequence belongs to the IF-1 family. In terms of assembly, component of the 30S ribosomal translation pre-initiation complex which assembles on the 30S ribosome in the order IF-2 and IF-3, IF-1 and N-formylmethionyl-tRNA(fMet); mRNA recruitment can occur at any time during PIC assembly.

It is found in the cytoplasm. Functionally, one of the essential components for the initiation of protein synthesis. Stabilizes the binding of IF-2 and IF-3 on the 30S subunit to which N-formylmethionyl-tRNA(fMet) subsequently binds. Helps modulate mRNA selection, yielding the 30S pre-initiation complex (PIC). Upon addition of the 50S ribosomal subunit IF-1, IF-2 and IF-3 are released leaving the mature 70S translation initiation complex. This Clostridium kluyveri (strain ATCC 8527 / DSM 555 / NBRC 12016 / NCIMB 10680 / K1) protein is Translation initiation factor IF-1.